The following is a 657-amino-acid chain: Probable potassium transport system protein Kup (657 aa).

The next 12 helical transmembrane spans lie at Ser-15–Met-35, Ile-48–Thr-68, Trp-100–Pro-120, Ile-147–Thr-167, Ile-173–Leu-193, Leu-219–Ser-239, Leu-251–Ile-271, Met-292–Ala-312, Ile-348–Phe-368, Tyr-378–Leu-398, Pro-403–Ile-423, and Lys-431–Ile-451.

It belongs to the HAK/KUP transporter (TC 2.A.72) family.

The protein localises to the cell membrane. It catalyses the reaction K(+)(in) + H(+)(in) = K(+)(out) + H(+)(out). In terms of biological role, transport of potassium into the cell. Likely operates as a K(+):H(+) symporter. In Clostridium perfringens (strain SM101 / Type A), this protein is Probable potassium transport system protein Kup.